The chain runs to 266 residues: Gap junction beta-4 protein (266 aa).

Residues 2–13 (NWGFLQGILSGV) lie within the membrane without spanning it. Residues 14-20 (NKYSTAL) are Cytoplasmic-facing. Residues 21–40 (GRIWLSVVFIFRVLVYVVAA) traverse the membrane as a helical segment. Over 41–73 (EEVWDDDQKDFICNTKQPGCPNVCYDEFFPVSH) the chain is Extracellular. Cystine bridges form between C53–C175, C60–C169, and C64–C164. A helical transmembrane segment spans residues 74 to 94 (VRLWALQLILVTCPSLLVVMH). Over 95-130 (VAYREERERKHRLKHGPNAPALYSNLSKKRGGLWWT) the chain is Cytoplasmic. The chain crosses the membrane as a helical span at residues 131 to 151 (YLLSLIFKAAVDSGFLYIFHC). Over 152 to 184 (IYKDYDMPRVVACSVTPCPHTVDCYIARPTEKK) the chain is Extracellular. A helical membrane pass occupies residues 185 to 205 (VFTYFMVVTAAICILLNLSEV). Topologically, residues 206-266 (VYLVGKRCME…MATVDAGVYP (61 aa)) are cytoplasmic.

The protein belongs to the connexin family. Beta-type (group I) subfamily. A hemichannel or connexon is composed of a hexamer of connexins. A functional gap junction is formed by the apposition of two hemichannels. Forms heteromeric channels with GJB2. Detected in cochlea (at protein level). Detected in cochlea. Expressed in skin.

The protein resides in the cell membrane. It localises to the cell junction. The protein localises to the gap junction. In terms of biological role, structural component of gap junctions. Gap junctions are dodecameric channels that connect the cytoplasm of adjoining cells. They are formed by the docking of two hexameric hemichannels, one from each cell membrane. Small molecules and ions diffuse from one cell to a neighboring cell via the central pore. This chain is Gap junction beta-4 protein (Gjb4), found in Mus musculus (Mouse).